Consider the following 218-residue polypeptide: Capsid protein (218 aa).

M1 bears the N-acetylmethionine; by host mark. The disordered stretch occupies residues 1 to 29 (MDKSESTSAGRNHRRRPRRGSRSAPSSAD). The span at 11-21 (RNHRRRPRRGS) shows a compositional bias: basic residues.

This sequence belongs to the cucumovirus capsid protein family.

Its subcellular location is the virion. In terms of biological role, capsid protein. Probably binds RNA and plays a role in packaging. The sequence is that of Capsid protein from Cucumber mosaic virus (strain C) (CMV).